The primary structure comprises 216 residues: Vascular endothelial growth factor A (216 aa).

Residues 1-26 (MNFLLTWIHWGLAALLYFHNAKVLQA) form the signal peptide. 3 disulfide bridges follow: Cys52–Cys94, Cys83–Cys128, and Cys87–Cys130. Residue Asn101 is glycosylated (N-linked (GlcNAc...) asparagine). A disordered region spans residues 140-161 (QEKKSKREKGKGQKRKRKRGRY). Residues 145 to 161 (KREKGKGQKRKRKRGRY) show a composition bias toward basic residues.

Belongs to the PDGF/VEGF growth factor family. As to quaternary structure, homodimer; disulfide-linked. Also found as heterodimer with PGF. Interacts to the FLT1/VEGFR1 and KDR/VEGFR2 receptors, heparan sulfate and heparin. In terms of tissue distribution, expressed in venom gland, heart, brain, liver, skeletal muscle and kidney.

Its subcellular location is the secreted. Functionally, growth factor active in angiogenesis, vasculogenesis and endothelial cell growth. Induces endothelial cell proliferation, promotes cell migration, inhibits apoptosis and induces permeabilization of blood vessels. This Protobothrops flavoviridis (Habu) protein is Vascular endothelial growth factor A.